The sequence spans 447 residues: Phosphoglucosamine mutase (447 aa).

S88 (phosphoserine intermediate) is an active-site residue. 4 residues coordinate Mg(2+): S88, D231, D233, and D235. S88 carries the phosphoserine modification.

The protein belongs to the phosphohexose mutase family. In terms of assembly, monomer. Also forms large aggregates. It depends on Mg(2+) as a cofactor. Activated by phosphorylation. Glucose-1,6-bisphosphate or fructose-1,6-bisphosphate can activate the enzyme in vitro. However, since glucose-1,6-bisphosphate is not believed to form in methanogens, the physiologically relevant activator might be a serine kinase protein.

It carries out the reaction alpha-D-glucosamine 1-phosphate = D-glucosamine 6-phosphate. Catalyzes the conversion of glucosamine-6-phosphate to glucosamine-1-phosphate. Also catalyzes the isomerization of glucose-1-phosphate to glucose-6-phosphate, but at a 5-fold lower rate. In Methanococcus maripaludis (strain DSM 14266 / JCM 13030 / NBRC 101832 / S2 / LL), this protein is Phosphoglucosamine mutase (glmM).